We begin with the raw amino-acid sequence, 523 residues long: uncharacterized protein (523 aa).

Residues 1 to 63 (MACVSTCLIL…NRHGIAVVKA (63 aa)) constitute a chloroplast transit peptide. Transmembrane regions (helical) follow at residues 180-200 (VSFG…IIAL), 386-406 (ALVI…NTLL), and 423-443 (IYPL…IRWF).

The protein resides in the plastid. It is found in the chloroplast membrane. This is an uncharacterized protein from Arabidopsis thaliana (Mouse-ear cress).